A 533-amino-acid chain; its full sequence is Non-specific phospholipase C1 (533 aa).

The signal sequence occupies residues 1–22 (MAFRRVLTTVILFCYLLISSQS).

Belongs to the bacterial phospholipase C family. As to expression, expressed in roots, leaves, stems, flowers and siliques.

The protein localises to the secreted. This is Non-specific phospholipase C1 (NPC1) from Arabidopsis thaliana (Mouse-ear cress).